The chain runs to 708 residues: Metal-pseudopaline receptor CntO (708 aa).

The signal sequence occupies residues 1 to 21 (MRVSVSLVLGVGLGCSSPALW). The 107-residue stretch at 63 to 169 (RIEDIPQAIS…PGGTVNLVTK (107 aa)) folds into the TBDR plug domain. Positions 174 to 708 (ERFARLHASA…NLTMSLTLNY (535 aa)) constitute a TBDR beta-barrel domain.

It belongs to the TonB-dependent receptor family.

Its subcellular location is the cell outer membrane. Transports the metallophore pseudopaline, which is involved in the acquisition of nickel and zinc, and thus enables bacterial growth inside the host, where metal access is limited. Is probably involved in the import of pseudopaline-metal complexes. This chain is Metal-pseudopaline receptor CntO, found in Pseudomonas aeruginosa (strain UCBPP-PA14).